The following is an 89-amino-acid chain: Large ribosomal subunit protein bL27 (89 aa).

The tract at residues 1 to 20 (MAHKKAGGSSRNGRDSIGRR) is disordered.

It belongs to the bacterial ribosomal protein bL27 family.

In Ruegeria pomeroyi (strain ATCC 700808 / DSM 15171 / DSS-3) (Silicibacter pomeroyi), this protein is Large ribosomal subunit protein bL27.